Here is a 139-residue protein sequence, read N- to C-terminus: Large ribosomal subunit protein uL16 (139 aa).

It belongs to the universal ribosomal protein uL16 family. As to quaternary structure, part of the 50S ribosomal subunit.

Binds 23S rRNA and is also seen to make contacts with the A and possibly P site tRNAs. In Prosthecochloris aestuarii (strain DSM 271 / SK 413), this protein is Large ribosomal subunit protein uL16.